We begin with the raw amino-acid sequence, 789 residues long: Mediator of RNA polymerase II transcription subunit 15 (789 aa).

Residues 9-73 form an interaction with SREBF1 region; that stretch reads DWRSAAFRQK…IHFRDIHNKK (65 aa). 2 disordered regions span residues 88–140 and 257–326; these read LTGG…APHG and QQQA…PLVS. Low complexity predominate over residues 89-102; sequence TGGPTPGAAGIGMP. The segment covering 108 to 118 has biased composition (gly residues); that stretch reads QSLGGMGGLGA. Low complexity-rich tracts occupy residues 257 to 274, 282 to 291, and 302 to 326; these read QQQA…SMQQ, ALPQQLSQLH, and AQQS…PLVS. Position 347 is an asymmetric dimethylarginine (arginine 347). Residues 404–531 form a disordered region; that stretch reads RFPPTSTMSA…PAGSSQAEEQ (128 aa). Positions 407-426 are enriched in polar residues; that stretch reads PTSTMSAGPSSSISLGGQPT. A compositionally biased stretch (low complexity) spans 427–450; sequence TQVSQSSLTMLSSPSPGQQVQTPQ. A compositionally biased stretch (pro residues) spans 451 to 463; sequence SMPPPPQPSPQPG. Over residues 464–483 the composition is skewed to low complexity; the sequence is SQPNSNVSSGPAPSPSSFLP. 2 stretches are compositionally biased toward polar residues: residues 494-504 and 512-530; these read VTARTPQNFSV and TPVN…QAEE. The Nuclear localization signal motif lies at 548–565; sequence RRMINKIDKNEDRKKDLS. Threonine 604 is subject to Phosphothreonine.

The protein belongs to the Mediator complex subunit 15 family. In terms of assembly, component of the Mediator complex, which is composed of MED1, MED4, MED6, MED7, MED8, MED9, MED10, MED11, MED12, MED13, MED13L, MED14, MED15, MED16, MED17, MED18, MED19, MED20, MED21, MED22, MED23, MED24, MED25, MED26, MED27, MED29, MED30, MED31, CCNC, CDK8 and CDC2L6/CDK11. The MED12, MED13, CCNC and CDK8 subunits form a distinct module termed the CDK8 module. Mediator containing the CDK8 module is less active than Mediator lacking this module in supporting transcriptional activation. Individual preparations of the Mediator complex lacking one or more distinct subunits have been variously termed ARC, CRSP, DRIP, PC2, SMCC and TRAP. Interacts with SMAD2, SMAD3, SREBF1 and SREBF2. Interacts with WWTR1. Interacts with TRIM11. Post-translationally, ubiquitinated by TRIM11, leading to proteasomal degradation.

Its subcellular location is the cytoplasm. It localises to the nucleus. Component of the Mediator complex, a coactivator involved in the regulated transcription of nearly all RNA polymerase II-dependent genes. Mediator functions as a bridge to convey information from gene-specific regulatory proteins to the basal RNA polymerase II transcription machinery. Mediator is recruited to promoters by direct interactions with regulatory proteins and serves as a scaffold for the assembly of a functional preinitiation complex with RNA polymerase II and the general transcription factors. Required for cholesterol-dependent gene regulation. Positively regulates the Nodal signaling pathway. The chain is Mediator of RNA polymerase II transcription subunit 15 (Med15) from Mus musculus (Mouse).